A 68-amino-acid polypeptide reads, in one-letter code: Urocalcin (68 aa).

Positions M1 to A27 are cleaved as a signal peptide. Residues S28 to Q35 constitute a propeptide that is removed on maturation. Cystine bridges form between C38–C52, C45–C56, and C51–C67. An essential for stimulation of [3H]ryanodine binding to RYR1 region spans residues K57 to R59.

The protein belongs to the scorpion calcin family. Expressed by the venom gland.

Its subcellular location is the secreted. In terms of biological role, this toxin only weakly stabilizes ryanodine receptor 1 (RyR1) opening in a long-lasting subconductance state (55% of the full conductance state obtained only at high concentrations (1 uM)). In addition, it has been shown to dose-dependently stimulate ryanodine binding to RyR1 with the lowest activity of all calcins (EC(50)=376 nM). It also augments the bell-shaped calcium-[3H]ryanodine binding curve that is maximal at about 10 uM calcium concentration. It binds a different site as ryanodine. It acts synergistically with caffeine. In contrast to other calcins, it does not trigger calcium release from sarcoplasmic vesicles even at high concentration (1 uM). In vivo, intracerebroventricular injection into mice induces neurotoxic symptoms, followed by death. This chain is Urocalcin, found in Urodacus yaschenkoi (Inland robust scorpion).